The sequence spans 234 residues: Uridylate kinase (234 aa).

Residue lysine 9–glycine 12 coordinates ATP. Glycine 51 contacts UMP. Residues glycine 52 and arginine 56 each coordinate ATP. UMP contacts are provided by residues aspartate 71 and cysteine 132–threonine 139. Residues threonine 159, tyrosine 165, and aspartate 168 each contribute to the ATP site.

This sequence belongs to the UMP kinase family. As to quaternary structure, homohexamer.

It is found in the cytoplasm. The catalysed reaction is UMP + ATP = UDP + ADP. It functions in the pathway pyrimidine metabolism; CTP biosynthesis via de novo pathway; UDP from UMP (UMPK route): step 1/1. Its activity is regulated as follows. Inhibited by UTP. Functionally, catalyzes the reversible phosphorylation of UMP to UDP. The polypeptide is Uridylate kinase (Prochlorococcus marinus (strain MIT 9515)).